The following is a 366-amino-acid chain: Histidinol-phosphate aminotransferase 1 (366 aa).

At Lys-226 the chain carries N6-(pyridoxal phosphate)lysine.

The protein belongs to the class-II pyridoxal-phosphate-dependent aminotransferase family. Histidinol-phosphate aminotransferase subfamily. In terms of assembly, homodimer. The cofactor is pyridoxal 5'-phosphate.

The catalysed reaction is L-histidinol phosphate + 2-oxoglutarate = 3-(imidazol-4-yl)-2-oxopropyl phosphate + L-glutamate. The protein operates within amino-acid biosynthesis; L-histidine biosynthesis; L-histidine from 5-phospho-alpha-D-ribose 1-diphosphate: step 7/9. This Mannheimia succiniciproducens (strain KCTC 0769BP / MBEL55E) protein is Histidinol-phosphate aminotransferase 1.